The sequence spans 105 residues: Large ribosomal subunit protein bL21 (105 aa).

Belongs to the bacterial ribosomal protein bL21 family. In terms of assembly, part of the 50S ribosomal subunit. Contacts protein L20.

This protein binds to 23S rRNA in the presence of protein L20. This is Large ribosomal subunit protein bL21 from Desulfatibacillum aliphaticivorans.